Consider the following 89-residue polypeptide: Small ribosomal subunit protein uS15 (89 aa).

Residues 1–21 (MSITAERKAEVIKDNARDKGD) are compositionally biased toward basic and acidic residues. The disordered stretch occupies residues 1 to 26 (MSITAERKAEVIKDNARDKGDTGSPE).

It belongs to the universal ribosomal protein uS15 family. Part of the 30S ribosomal subunit. Forms a bridge to the 50S subunit in the 70S ribosome, contacting the 23S rRNA.

In terms of biological role, one of the primary rRNA binding proteins, it binds directly to 16S rRNA where it helps nucleate assembly of the platform of the 30S subunit by binding and bridging several RNA helices of the 16S rRNA. Its function is as follows. Forms an intersubunit bridge (bridge B4) with the 23S rRNA of the 50S subunit in the ribosome. The protein is Small ribosomal subunit protein uS15 of Sphingopyxis alaskensis (strain DSM 13593 / LMG 18877 / RB2256) (Sphingomonas alaskensis).